Reading from the N-terminus, the 156-residue chain is Small ribosomal subunit protein uS7 (156 aa).

Belongs to the universal ribosomal protein uS7 family. In terms of assembly, part of the 30S ribosomal subunit. Contacts proteins S9 and S11.

Functionally, one of the primary rRNA binding proteins, it binds directly to 16S rRNA where it nucleates assembly of the head domain of the 30S subunit. Is located at the subunit interface close to the decoding center, probably blocks exit of the E-site tRNA. In Prochlorococcus marinus (strain MIT 9301), this protein is Small ribosomal subunit protein uS7.